Here is a 122-residue protein sequence, read N- to C-terminus: Large ribosomal subunit protein uL14c (122 aa).

It belongs to the universal ribosomal protein uL14 family. Part of the 50S ribosomal subunit.

Its subcellular location is the plastid. The protein localises to the chloroplast. Its function is as follows. Binds to 23S rRNA. The chain is Large ribosomal subunit protein uL14c from Stigeoclonium helveticum (Green alga).